The following is a 563-amino-acid chain: Serine palmitoyltransferase 3 (563 aa).

A compositionally biased stretch (polar residues) spans 1–29; the sequence is MANLNDSAVTNGTLHNPKTQQGKRQSTGC. The tract at residues 1–32 is disordered; the sequence is MANLNDSAVTNGTLHNPKTQQGKRQSTGCVKN. The helical transmembrane segment at 59–79 threads the bilayer; the sequence is PLYVYVLTYMGYGIGILFGYL. Lysine 371 bears the N6-(pyridoxal phosphate)lysine mark.

This sequence belongs to the class-II pyridoxal-phosphate-dependent aminotransferase family. As to quaternary structure, component of the serine palmitoyltransferase (SPT) complex, which is composed of SPTLC1, SPTLC2 or SPTLC3 and SPTSSA or SPTSSB. The heterodimer consisting of SPTLC1 and SPTLC2/SPTLC3 forms the catalytic core of the enzyme, while SPTSSA or SPTSSB subunits determine substrate specificity. SPT also interacts with ORMDL proteins, especially ORMDL3, which negatively regulate SPT activity in the presence of ceramides. Requires pyridoxal 5'-phosphate as cofactor. In terms of tissue distribution, expressed in white and brown adipose tissues.

It is found in the endoplasmic reticulum membrane. The catalysed reaction is L-serine + hexadecanoyl-CoA + H(+) = 3-oxosphinganine + CO2 + CoA. The enzyme catalyses dodecanoyl-CoA + L-serine + H(+) = 3-oxotetradecasphinganine + CO2 + CoA. It carries out the reaction tetradecanoyl-CoA + L-serine + H(+) = 3-oxohexadecasphinganine + CO2 + CoA. It catalyses the reaction octadecanoyl-CoA + L-serine + H(+) = 3-oxoeicosasphinganine + CO2 + CoA. It participates in lipid metabolism; sphingolipid metabolism. SPT complex catalytic activity is negatively regulated by ORMDL proteins, including ORMDL3, in the presence of ceramides. This mechanism allows to maintain ceramide levels at sufficient concentrations for the production of complex sphingolipids, but which prevents the accumulation of ceramides to levels that trigger apoptosis. Its function is as follows. Component of the serine palmitoyltransferase multisubunit enzyme (SPT) that catalyzes the initial and rate-limiting step in sphingolipid biosynthesis by condensing L-serine and activated acyl-CoA (most commonly palmitoyl-CoA) to form long-chain bases. The SPT complex is composed of SPTLC1, SPTLC2 or SPTLC3 and SPTSSA or SPTSSB. Within this complex, the heterodimer consisting of SPTLC1 and SPTLC2/SPTLC3 forms the catalytic core. The composition of the serine palmitoyltransferase (SPT) complex determines the substrate preference. The SPTLC1-SPTLC2-SPTSSA complex shows a strong preference for C16-CoA substrate, while the SPTLC1-SPTLC3-SPTSSA isozyme uses both C14-CoA and C16-CoA as substrates, with a slight preference for C14-CoA. The SPTLC1-SPTLC2-SPTSSB complex shows a strong preference for C18-CoA substrate, while the SPTLC1-SPTLC3-SPTSSB isozyme displays an ability to use a broader range of acyl-CoAs, without apparent preference. In Mus musculus (Mouse), this protein is Serine palmitoyltransferase 3.